The following is a 316-amino-acid chain: 4-hydroxy-3-methylbut-2-enyl diphosphate reductase (316 aa).

Position 12 (Cys12) interacts with [4Fe-4S] cluster. (2E)-4-hydroxy-3-methylbut-2-enyl diphosphate contacts are provided by His41 and His74. Residues His41 and His74 each coordinate dimethylallyl diphosphate. Isopentenyl diphosphate contacts are provided by His41 and His74. Cys96 is a [4Fe-4S] cluster binding site. His124 provides a ligand contact to (2E)-4-hydroxy-3-methylbut-2-enyl diphosphate. His124 serves as a coordination point for dimethylallyl diphosphate. His124 is a binding site for isopentenyl diphosphate. Residue Glu126 is the Proton donor of the active site. Thr169 is a (2E)-4-hydroxy-3-methylbut-2-enyl diphosphate binding site. Residue Cys199 participates in [4Fe-4S] cluster binding. (2E)-4-hydroxy-3-methylbut-2-enyl diphosphate is bound by residues Ser227, Ser228, Asn229, and Ser271. Positions 227, 228, 229, and 271 each coordinate dimethylallyl diphosphate. Positions 227, 228, 229, and 271 each coordinate isopentenyl diphosphate.

The protein belongs to the IspH family. The cofactor is [4Fe-4S] cluster.

The catalysed reaction is isopentenyl diphosphate + 2 oxidized [2Fe-2S]-[ferredoxin] + H2O = (2E)-4-hydroxy-3-methylbut-2-enyl diphosphate + 2 reduced [2Fe-2S]-[ferredoxin] + 2 H(+). It carries out the reaction dimethylallyl diphosphate + 2 oxidized [2Fe-2S]-[ferredoxin] + H2O = (2E)-4-hydroxy-3-methylbut-2-enyl diphosphate + 2 reduced [2Fe-2S]-[ferredoxin] + 2 H(+). Its pathway is isoprenoid biosynthesis; dimethylallyl diphosphate biosynthesis; dimethylallyl diphosphate from (2E)-4-hydroxy-3-methylbutenyl diphosphate: step 1/1. The protein operates within isoprenoid biosynthesis; isopentenyl diphosphate biosynthesis via DXP pathway; isopentenyl diphosphate from 1-deoxy-D-xylulose 5-phosphate: step 6/6. Catalyzes the conversion of 1-hydroxy-2-methyl-2-(E)-butenyl 4-diphosphate (HMBPP) into a mixture of isopentenyl diphosphate (IPP) and dimethylallyl diphosphate (DMAPP). Acts in the terminal step of the DOXP/MEP pathway for isoprenoid precursor biosynthesis. The polypeptide is 4-hydroxy-3-methylbut-2-enyl diphosphate reductase (Xanthomonas campestris pv. campestris (strain 8004)).